The chain runs to 175 residues: MHLVFLLMKFQMKLNESIRYASILVIDESGNPLGVFTSEQGRQLAAKKGLDLLLINPNADPPVCKIVNYGKYKFELEKKAKAKRKNQSQLKEIQMSYNMEEHDYQVRLSQACKFLKAGDKVKVTLMLKGREMQHLELAQNKMAQFQADVSSLAQLAKPPSQEGRNLSAIFVPKKS.

The protein belongs to the IF-3 family. Monomer.

It is found in the plastid. The protein localises to the chloroplast. Its function is as follows. IF-3 binds to the 30S ribosomal subunit and shifts the equilibrium between 70S ribosomes and their 50S and 30S subunits in favor of the free subunits, thus enhancing the availability of 30S subunits on which protein synthesis initiation begins. In Cyanidioschyzon merolae (strain NIES-3377 / 10D) (Unicellular red alga), this protein is Translation initiation factor IF-3, chloroplastic.